Here is a 518-residue protein sequence, read N- to C-terminus: Squalene monooxygenase 1,2 (518 aa).

Transmembrane regions (helical) follow at residues 3 to 23 (MAFV…WTIF) and 48 to 68 (GPDV…YALA). Residues 58-59 (VG), 78-79 (ER), arginine 86, phenylalanine 91, arginine 158, valine 174, aspartate 337, and methionine 350 contribute to the FAD site. The helical transmembrane segment at 448–468 (LFYHLFVISLSSIGQLLSPFP) threads the bilayer.

This sequence belongs to the squalene monooxygenase family. Requires FAD as cofactor.

It is found in the membrane. It carries out the reaction squalene + reduced [NADPH--hemoprotein reductase] + O2 = (S)-2,3-epoxysqualene + oxidized [NADPH--hemoprotein reductase] + H2O + H(+). It participates in terpene metabolism; lanosterol biosynthesis; lanosterol from farnesyl diphosphate: step 2/3. Its function is as follows. Catalyzes the stereospecific oxidation of squalene to (S)-2,3-epoxysqualene, and is considered to be a rate-limiting enzyme in steroid biosynthesis. The protein is Squalene monooxygenase 1,2 (SQP1,2) of Brassica napus (Rape).